A 367-amino-acid chain; its full sequence is ELAV-like protein 3 (367 aa).

RRM domains follow at residues 39 to 117 (TNLI…YARP), 125 to 205 (ANLY…FANN), and 284 to 362 (WCIF…FKTS).

The protein belongs to the RRM elav family. In terms of assembly, interacts with MAP1B light chain LC1. Brain specific.

In terms of biological role, RNA-binding protein that binds to AU-rich element (ARE) sequences of target mRNAs, including VEGF mRNA. May also bind poly-A tracts via RRM 3. May be involved in neuronal differentiation and maintenance. Plays a role in the stabilization of GAP43 mRNA and in spatial learning. The sequence is that of ELAV-like protein 3 (ELAVL3) from Homo sapiens (Human).